The primary structure comprises 388 residues: S-adenosylmethionine synthase (388 aa).

His17 provides a ligand contact to ATP. Asp19 is a binding site for Mg(2+). Glu45 contributes to the K(+) binding site. Residues Glu58 and Gln101 each contribute to the L-methionine site. The flexible loop stretch occupies residues 101–111 (QSPDIGQGVDT). ATP is bound by residues 160 to 162 (DGK), 226 to 227 (RF), Asp235, 241 to 242 (RK), Ala258, and Lys262. Asp235 is a binding site for L-methionine. Lys266 contributes to the L-methionine binding site.

The protein belongs to the AdoMet synthase family. In terms of assembly, homotetramer; dimer of dimers. Mg(2+) is required as a cofactor. The cofactor is K(+).

The protein localises to the cytoplasm. It carries out the reaction L-methionine + ATP + H2O = S-adenosyl-L-methionine + phosphate + diphosphate. The protein operates within amino-acid biosynthesis; S-adenosyl-L-methionine biosynthesis; S-adenosyl-L-methionine from L-methionine: step 1/1. In terms of biological role, catalyzes the formation of S-adenosylmethionine (AdoMet) from methionine and ATP. The overall synthetic reaction is composed of two sequential steps, AdoMet formation and the subsequent tripolyphosphate hydrolysis which occurs prior to release of AdoMet from the enzyme. The protein is S-adenosylmethionine synthase of Anaeromyxobacter sp. (strain K).